The chain runs to 108 residues: Small ribosomal subunit protein uS10 (108 aa).

The protein belongs to the universal ribosomal protein uS10 family. In terms of assembly, part of the 30S ribosomal subunit.

Functionally, involved in the binding of tRNA to the ribosomes. The polypeptide is Small ribosomal subunit protein uS10 (Ehrlichia chaffeensis (strain ATCC CRL-10679 / Arkansas)).